The following is a 240-amino-acid chain: LexA repressor (240 aa).

A DNA-binding region (H-T-H motif) is located at residues phenylalanine 26 to threonine 46. Residues serine 161 and lysine 199 each act as for autocatalytic cleavage activity in the active site.

It belongs to the peptidase S24 family. In terms of assembly, homodimer.

The enzyme catalyses Hydrolysis of Ala-|-Gly bond in repressor LexA.. Functionally, represses a number of genes involved in the response to DNA damage (SOS response), including recA and lexA. In the presence of single-stranded DNA, RecA interacts with LexA causing an autocatalytic cleavage which disrupts the DNA-binding part of LexA, leading to derepression of the SOS regulon and eventually DNA repair. This chain is LexA repressor, found in Brucella melitensis biotype 1 (strain ATCC 23456 / CCUG 17765 / NCTC 10094 / 16M).